The sequence spans 115 residues: Probable 4-amino-4-deoxy-L-arabinose-phosphoundecaprenol flippase subunit ArnE (115 aa).

3 consecutive transmembrane segments (helical) span residues 42–62 (PWPW…LLLL), 65–85 (VEVG…TLAA), and 93–112 (VDRR…VLLG). The EamA domain maps to 46-113 (LALLALGLGL…IVAGVVLLGR (68 aa)).

Belongs to the ArnE family. As to quaternary structure, heterodimer of ArnE and ArnF.

It localises to the cell inner membrane. It functions in the pathway bacterial outer membrane biogenesis; lipopolysaccharide biosynthesis. In terms of biological role, translocates 4-amino-4-deoxy-L-arabinose-phosphoundecaprenol (alpha-L-Ara4N-phosphoundecaprenol) from the cytoplasmic to the periplasmic side of the inner membrane. This is Probable 4-amino-4-deoxy-L-arabinose-phosphoundecaprenol flippase subunit ArnE from Pseudomonas aeruginosa (strain UCBPP-PA14).